A 246-amino-acid chain; its full sequence is UPF0309 protein ABC0887 (246 aa).

In terms of domain architecture, SIS spans 33 to 212; the sequence is MVHAIKEGKS…VLKMIEQLEE (180 aa).

Belongs to the UPF0309 family.

The sequence is that of UPF0309 protein ABC0887 from Shouchella clausii (strain KSM-K16) (Alkalihalobacillus clausii).